The chain runs to 522 residues: F-box/LRR-repeat protein 16 (522 aa).

One can recognise an F-box domain in the interval 38–84 (YDFTANLPDDCLAHIFQFLSAGDRKRCSLVSKRWLLVDGQNRHRLSL). LRR repeat units follow at residues 115-140 (SFSL…KLRG), 141-166 (CREI…SCGS), 169-191 (FGAK…SLKR), 266-290 (RLQV…HIVK), 291-316 (TPDC…HIDG), 319-344 (VKRI…VLIG), 348-369 (TYMS…ALCG), 370-393 (SGTI…KFCI), 395-420 (GCLI…KVKK), and 421-447 (CSLV…DDDE).

The polypeptide is F-box/LRR-repeat protein 16 (FBL16) (Arabidopsis thaliana (Mouse-ear cress)).